Consider the following 604-residue polypeptide: Elongation factor 4 (604 aa).

The tr-type G domain maps to 7–189 (KNIRNFCIIA…QIVTKIPAPS (183 aa)). GTP-binding positions include 19–24 (DHGKST) and 136–139 (NKID).

Belongs to the TRAFAC class translation factor GTPase superfamily. Classic translation factor GTPase family. LepA subfamily.

The protein resides in the cell membrane. The catalysed reaction is GTP + H2O = GDP + phosphate + H(+). Required for accurate and efficient protein synthesis under certain stress conditions. May act as a fidelity factor of the translation reaction, by catalyzing a one-codon backward translocation of tRNAs on improperly translocated ribosomes. Back-translocation proceeds from a post-translocation (POST) complex to a pre-translocation (PRE) complex, thus giving elongation factor G a second chance to translocate the tRNAs correctly. Binds to ribosomes in a GTP-dependent manner. The chain is Elongation factor 4 from Lachnospira eligens (strain ATCC 27750 / DSM 3376 / VPI C15-48 / C15-B4) (Eubacterium eligens).